A 376-amino-acid chain; its full sequence is Riboflavin biosynthesis protein RibD (376 aa).

The deaminase stretch occupies residues 1-150 (MEDFSEQQLF…QPYLYQRTHN (150 aa)). The 123-residue stretch at 6 to 128 (EQQLFFMRRA…MLRQAGIQVY (123 aa)) folds into the CMP/dCMP-type deaminase domain. Residue histidine 55 coordinates Zn(2+). The active-site Proton donor is glutamate 57. Cysteine 80 and cysteine 89 together coordinate Zn(2+). Residues 151–376 (FPWTILKSAA…SPQVFEPIRN (226 aa)) are reductase. Residue alanine 159 coordinates NADP(+). Residue serine 173 participates in substrate binding. Tryptophan 175 serves as a coordination point for NADP(+). Arginine 189 serves as a coordination point for substrate. 2 residues coordinate NADP(+): threonine 201 and aspartate 205. Residues leucine 209 and arginine 212 each contribute to the substrate site. Serine 230 contacts NADP(+). Glutamate 300 contacts substrate. 302–308 (GTTLHTS) lines the NADP(+) pocket.

It in the N-terminal section; belongs to the cytidine and deoxycytidylate deaminase family. The protein in the C-terminal section; belongs to the HTP reductase family. The cofactor is Zn(2+).

The enzyme catalyses 2,5-diamino-6-hydroxy-4-(5-phosphoribosylamino)-pyrimidine + H2O + H(+) = 5-amino-6-(5-phospho-D-ribosylamino)uracil + NH4(+). The catalysed reaction is 5-amino-6-(5-phospho-D-ribitylamino)uracil + NADP(+) = 5-amino-6-(5-phospho-D-ribosylamino)uracil + NADPH + H(+). It participates in cofactor biosynthesis; riboflavin biosynthesis; 5-amino-6-(D-ribitylamino)uracil from GTP: step 2/4. Its pathway is cofactor biosynthesis; riboflavin biosynthesis; 5-amino-6-(D-ribitylamino)uracil from GTP: step 3/4. In terms of biological role, converts 2,5-diamino-6-(ribosylamino)-4(3h)-pyrimidinone 5'-phosphate into 5-amino-6-(ribosylamino)-2,4(1h,3h)-pyrimidinedione 5'-phosphate. The protein is Riboflavin biosynthesis protein RibD (ribD) of Chlamydia pneumoniae (Chlamydophila pneumoniae).